The following is a 425-amino-acid chain: Glucose-6-phosphate 1-dehydrogenase (425 aa).

NADP(+)-binding residues include arginine 44 and lysine 135. Positions 165, 169, 201, and 220 each coordinate substrate. The active-site Proton acceptor is the histidine 225. Position 311 (lysine 311) interacts with substrate.

Belongs to the glucose-6-phosphate dehydrogenase family.

It carries out the reaction D-glucose 6-phosphate + NADP(+) = 6-phospho-D-glucono-1,5-lactone + NADPH + H(+). It functions in the pathway carbohydrate degradation; pentose phosphate pathway; D-ribulose 5-phosphate from D-glucose 6-phosphate (oxidative stage): step 1/3. Functionally, catalyzes the oxidation of glucose 6-phosphate to 6-phosphogluconolactone. The protein is Glucose-6-phosphate 1-dehydrogenase of Helicobacter pylori (strain J99 / ATCC 700824) (Campylobacter pylori J99).